A 382-amino-acid chain; its full sequence is MNSLDLPKAPQDTRVVVAMSGGVDSSVVAGLLKRQGYDVVGITLQLYDHGAATHRRGACCAGQDIHDARRAAETLGIPHYVLDYEDRFREAVIDRFADSYIHGETPIPCVECNRSIKFRDLLATALDLGADALATGHYVASRPRPGGSRALYRALDPARDQSYFLYATTAEQLDVLRFPLGELPKDETRRLAREFGLSVADKPDSQDICFVPQGRYQDVIARLRPDSVRPGEIVHLDGRTLGRHDGIIGFTVGQRRGLKLATGEPLYVVRLDPETARVVVGPREALATSVIRLAETNWLGDEPLTELDGMPVAVRVRSTREPRPATLRWNRAASCAEVMLATPEDGVSPGQACAIYADEGPRARVLGGGTILRVEASRREAA.

Residues 18–25 (AMSGGVDS) and Leu44 each bind ATP. Cys112 serves as the catalytic Nucleophile. Cys112 and Cys209 are disulfide-bonded. Gly136 serves as a coordination point for ATP. The interval 159-161 (RDQ) is interaction with tRNA. Residue Cys209 is the Cysteine persulfide intermediate of the active site.

The protein belongs to the MnmA/TRMU family.

It is found in the cytoplasm. The enzyme catalyses S-sulfanyl-L-cysteinyl-[protein] + uridine(34) in tRNA + AH2 + ATP = 2-thiouridine(34) in tRNA + L-cysteinyl-[protein] + A + AMP + diphosphate + H(+). Catalyzes the 2-thiolation of uridine at the wobble position (U34) of tRNA, leading to the formation of s(2)U34. In Methylobacterium nodulans (strain LMG 21967 / CNCM I-2342 / ORS 2060), this protein is tRNA-specific 2-thiouridylase MnmA.